Reading from the N-terminus, the 829-residue chain is UBA domain-containing protein 8 (829 aa).

An EH 1 domain is found at 10–109 (EQQEFDRLLE…KQAKDDHHIK (100 aa)). One can recognise an EF-hand 1 domain in the interval 43–78 (LPQKILAKIWDYCDQEDKGSLDRNQVYACFRLISQA). Residues 93-121 (GDPPILPKQAKDDHHIKRSSSETADFTPF) are disordered. Residues Ser-112 and Ser-113 each carry the phosphoserine modification. 2 consecutive EH domains span residues 129 to 225 (ERSE…AKSE) and 300 to 398 (DRSN…SDDT). Residues 333-368 (LDSEELARIWDTVDTQDRGYIDKDEFAVAMEIIKLR) form the EF-hand 2 domain. Composition is skewed to polar residues over residues 466–506 (SFQD…TQSI) and 574–590 (TIPGSTSAALDDQQTTE). Disordered stretches follow at residues 466 to 520 (SFQD…VNSS), 574 to 614 (TIPG…MRKL), and 724 to 785 (KPQV…QSYE). The stretch at 602 to 709 (EPTEEEQEEM…AKIDSIIADS (108 aa)) forms a coiled coil. A compositionally biased stretch (pro residues) spans 728–737 (TPAPPTPAPT). Positions 764–774 (HANSSTPMNYV) are enriched in polar residues. Over residues 775–785 (SQPESPPQSYE) the composition is skewed to low complexity. The UBA domain maps to 788–828 (QNDNELLQELLSMGFPREKAVIALEATNYDVNEAANILLSS).

The polypeptide is UBA domain-containing protein 8 (ucp8) (Schizosaccharomyces pombe (strain 972 / ATCC 24843) (Fission yeast)).